Here is a 157-residue protein sequence, read N- to C-terminus: AM-toxin biosynthesis protein 15 (157 aa).

The tract at residues 17-43 (RARHWDSKQGSSNSDVASGGSEVAGNS) is disordered.

It functions in the pathway mycotoxin biosynthesis. Functionally, part of the gene clusters that mediate the biosynthesis of AM-toxins, host-selective toxins (HSTs) causing Alternaria blotch on apple, a worldwide distributed disease. AM-toxins are cyclic depsipeptides containing the 3 residues 2-hydroxy-isovaleric acid (2-HIV), dehydroalanine, L-alanine which are common for all 3 AM-toxins I to III. The fourth precursor is L-alpha-amino-methoxyphenyl-valeric acid (L-Amv) for AM-toxin I, L-alpha-amino-phenyl-valeric acid (L-Apv) for AM-toxin II, and L-alpha-amino-hydroxyphenyl-valeric acid (L-Ahv) for AM-toxin III. AM-toxins have two target sites for affecting susceptible apple cells; they cause invagination of the plasma membrane and electrolyte loss and chloroplast disorganization. The non-ribosomal peptide synthetase AMT1 contains 4 catalytic modules and is responsible for activation of each residue in AM-toxin. The aldo-keto reductase AMT2 catalyzes the conversion of 2-keto-isovaleric acid (2-KIV) to 2-hydroxy-isovaleric acid (2-HIV), one of the precursor residues incorporated by AMT1 during AM-toxin biosynthesis, by reduction of its ketone to an alcohol. The cytochrome P450 monooxygenase AMT3 and the thioesterase AMT4 are also important for AM-toxin production, but their exact function within the AM-toxin biosynthesis are not known yet. Up to 21 proteins (including AMT1 to AMT4) are predicted to be involved in AM-toxin biosynthesis since their expression ishighly up-regulated in AM-toxin-producing cultures. This Alternaria alternata (Alternaria rot fungus) protein is AM-toxin biosynthesis protein 15.